The following is a 321-amino-acid chain: Putative pyridoxal kinase (321 aa).

Residues Ser23 and Tyr144 each contribute to the substrate site. Residues 203-204 (TS) and 230-242 (TFPR…VGTG) contribute to the ATP site. Substrate is bound at residue Asp243.

Belongs to the pyridoxine kinase family. Requires Zn(2+) as cofactor. It depends on Mg(2+) as a cofactor.

It catalyses the reaction pyridoxal + ATP = pyridoxal 5'-phosphate + ADP + H(+). Required for synthesis of pyridoxal-5-phosphate from vitamin B6. In Caenorhabditis elegans, this protein is Putative pyridoxal kinase.